The sequence spans 69 residues: U2-agatoxin-Ao1g (69 aa).

A signal peptide spans 1 to 20 (MKAIISLLLISAMVFSMIEA). The propeptide occupies 21-34 (VPVEEGLQLFEGER). 3 cysteine pairs are disulfide-bonded: Cys-36-Cys-52, Cys-43-Cys-57, and Cys-51-Cys-67. The residue at position 68 (Leu-68) is a Leucine amide.

This sequence belongs to the neurotoxin 01 (U2-agtx) family. In terms of tissue distribution, expressed by the venom gland.

The protein resides in the secreted. In terms of biological role, insect active toxin causing rapid but reversible paralysis in crickets. No activity shown in mammals. Does not show effect on mammalian voltage-gated calcium channels. The protein is U2-agatoxin-Ao1g of Agelena orientalis (Funnel-web spider).